The chain runs to 396 residues: Elongation factor Tu 2 (396 aa).

The region spanning 10–206 is the tr-type G domain; that stretch reads KPHVNVGTIG…ALDSYIPLPE (197 aa). A G1 region spans residues 19–26; the sequence is GHVDHGKT. 19-26 is a binding site for GTP; sequence GHVDHGKT. Mg(2+) is bound at residue Thr26. The segment at 60–64 is G2; sequence GITIN. Residues 81 to 84 form a G3 region; that stretch reads DCPG. Residues 81–85 and 136–139 each bind GTP; these read DCPGH and NKCD. Positions 136-139 are G4; the sequence is NKCD. The segment at 174-176 is G5; that stretch reads SAK.

This sequence belongs to the TRAFAC class translation factor GTPase superfamily. Classic translation factor GTPase family. EF-Tu/EF-1A subfamily. In terms of assembly, monomer.

The protein resides in the cytoplasm. The enzyme catalyses GTP + H2O = GDP + phosphate + H(+). In terms of biological role, GTP hydrolase that promotes the GTP-dependent binding of aminoacyl-tRNA to the A-site of ribosomes during protein biosynthesis. This is Elongation factor Tu 2 from Albidiferax ferrireducens (strain ATCC BAA-621 / DSM 15236 / T118) (Rhodoferax ferrireducens).